Here is a 406-residue protein sequence, read N- to C-terminus: MKKDVKKVVLAYSGGLDTSIILKWLQDEYKCEVVTFTADIGQGEELEPARKKALALGVKPENIFIEDLREEFVRDYVFPMFRANAIYEGEYLLGTSIARPLIAKRQAEIAKLTGADGVSHGATGKGNDQVRFELAYYAINPNLKVIVPWREWDLNSREKLLAYAEKNGIDITRKPGKSPYSMDANLLHISYEGLVLEDPNHAPENDMWRWCVSPKDAPNESEIITIGYEKGDPVSINGKKMSPAEILTELNHLGAKHGIGRLDLVENRYVGMKSRGCYETPGGTIMLKAHRAIESITLDRGSAHLKDELMPRYAELIYNGFWFSPERLMLQAAIDKSQEHVNGEVRVELYKGNVTILGRSSKDDNLFSEAYCTFEEDSVYNPKDADGFIKLNALRFIIASKNGRKF.

ATP contacts are provided by residues 11–19 (AYSGGLDTS) and alanine 38. The L-citrulline site is built by tyrosine 91 and serine 96. Residue glycine 121 participates in ATP binding. L-aspartate is bound by residues threonine 123, asparagine 127, and aspartate 128. Residue asparagine 127 coordinates L-citrulline. Arginine 131, serine 181, serine 190, glutamate 266, and tyrosine 278 together coordinate L-citrulline.

Belongs to the argininosuccinate synthase family. Type 1 subfamily. As to quaternary structure, homotetramer.

The protein resides in the cytoplasm. The enzyme catalyses L-citrulline + L-aspartate + ATP = 2-(N(omega)-L-arginino)succinate + AMP + diphosphate + H(+). The protein operates within amino-acid biosynthesis; L-arginine biosynthesis; L-arginine from L-ornithine and carbamoyl phosphate: step 2/3. The protein is Argininosuccinate synthase of Campylobacter curvus (strain 525.92).